Reading from the N-terminus, the 247-residue chain is tRNA (guanine-N(7)-)-methyltransferase (247 aa).

Residues G70, 93 to 94, 128 to 129, and L148 each bind S-adenosyl-L-methionine; these read EI and NA. Residue D151 is part of the active site. 226 to 228 serves as a coordination point for S-adenosyl-L-methionine; sequence SEE.

This sequence belongs to the class I-like SAM-binding methyltransferase superfamily. TrmB family.

The protein resides in the nucleus. The enzyme catalyses guanosine(46) in tRNA + S-adenosyl-L-methionine = N(7)-methylguanosine(46) in tRNA + S-adenosyl-L-homocysteine. The protein operates within tRNA modification; N(7)-methylguanine-tRNA biosynthesis. Catalyzes the formation of N(7)-methylguanine at position 46 (m7G46) in tRNA. In Drosophila persimilis (Fruit fly), this protein is tRNA (guanine-N(7)-)-methyltransferase.